Here is a 350-residue protein sequence, read N- to C-terminus: Glycerol-1-phosphate dehydrogenase [NAD(P)+] (350 aa).

Residues 96-100 (GNIID) and 118-121 (TAPS) each bind NAD(+). Residue Asp123 coordinates substrate. An NAD(+)-binding site is contributed by Ser127. Asp170 contributes to the substrate binding site. Zn(2+) contacts are provided by Asp170 and His250. Position 254 (His254) interacts with substrate. Residue His266 participates in Zn(2+) binding.

This sequence belongs to the glycerol-1-phosphate dehydrogenase family. In terms of assembly, homodimer. Zn(2+) serves as cofactor.

It localises to the cytoplasm. The enzyme catalyses sn-glycerol 1-phosphate + NAD(+) = dihydroxyacetone phosphate + NADH + H(+). It catalyses the reaction sn-glycerol 1-phosphate + NADP(+) = dihydroxyacetone phosphate + NADPH + H(+). Its pathway is membrane lipid metabolism; glycerophospholipid metabolism. Catalyzes the NAD(P)H-dependent reduction of dihydroxyacetonephosphate (DHAP or glycerone phosphate) to glycerol 1-phosphate (G1P). The G1P thus generated is used as the glycerophosphate backbone of phospholipids in the cellular membranes of Archaea. This chain is Glycerol-1-phosphate dehydrogenase [NAD(P)+], found in Sulfurisphaera tokodaii (strain DSM 16993 / JCM 10545 / NBRC 100140 / 7) (Sulfolobus tokodaii).